Reading from the N-terminus, the 152-residue chain is Transcriptional regulator MraZ (152 aa).

SpoVT-AbrB domains follow at residues 5–52 and 81–124; these read ASAI…PIHE and AHEV…DEQA.

Belongs to the MraZ family. In terms of assembly, forms oligomers.

The protein resides in the cytoplasm. Its subcellular location is the nucleoid. The chain is Transcriptional regulator MraZ from Shewanella oneidensis (strain ATCC 700550 / JCM 31522 / CIP 106686 / LMG 19005 / NCIMB 14063 / MR-1).